The sequence spans 152 residues: Deoxyuridine 5'-triphosphate nucleotidohydrolase (152 aa).

Residues 63 to 65 (RSG), asparagine 76, and 80 to 82 (TID) each bind substrate. The segment at 129–152 (LDDTERGQGGYGSTGVSAMPPVDG) is disordered.

The protein belongs to the dUTPase family. Mg(2+) is required as a cofactor.

The enzyme catalyses dUTP + H2O = dUMP + diphosphate + H(+). It functions in the pathway pyrimidine metabolism; dUMP biosynthesis; dUMP from dCTP (dUTP route): step 2/2. Functionally, this enzyme is involved in nucleotide metabolism: it produces dUMP, the immediate precursor of thymidine nucleotides and it decreases the intracellular concentration of dUTP so that uracil cannot be incorporated into DNA. The sequence is that of Deoxyuridine 5'-triphosphate nucleotidohydrolase from Cutibacterium acnes (strain DSM 16379 / KPA171202) (Propionibacterium acnes).